The sequence spans 893 residues: MNENGATPVAAARRHRPLPAERATSNSNETGLLINVIRSLTSSVSEDQREVEKSRLEKGYKESGALIDRLVKNHQQDVEKCLVSFRDVSSKISNCRERIHNVRNALHTVKSLLELRRDDLKKLWHENAQQKSVCEIMAKLEELREAPSKIENLISKEQYQQAADTVTESRELINGRLSRVEGLSHLSAEIERFTKILIDKINDTLVNMLVVEPFEKHLLHIVRTIPEHRINQNAYCHSLSTKSRSGSGSVSSFSDVSAKSRIVSSVEALSTLFRTVEERHWDVDRLMMLGKNMIDKMIVNTVQVMKIGANIDESNEGDTTHLKQLMQLLSAQFDSASQQHAEFGVLVEKQLGRKDVVTSFWRSAQSAIEVVVSEHLDINPLLEKQNVLGTASRKQLFRFENTACATPNANSSSHRTKAVICKPSAYNIKVIFPILSRLMETTEKNINDSPCELRRFMHSFVMEVFVERVKGELASRIEGALRGGEAVRVSTNKKILPSCEKVLNLCKEVQDLIVSIDLYADRFAALWLLVLTDYFKNMTDVYDRMTPKNPDPSLPNSEALPTRRQKISAAWTADDDISRLLMSLPNWHAASISPMTPAVESELDVGERNKRESEILIGNLGTQAQNSLSESDLITDMNDIKMFASLHESLRWFSDEIRELVHSLPANVKMMLDTCMVQVRLKDGQMIDNNSVPSAIEDCVRRLESIADSCLLLLHIEIRVHCFFHLAPLAKYRNTSSHNEVDPEVVALGKDLHQFHDNLKDVLSPAKLSYVFDGLGHLCASLFIHYSQFMPRLTEAAKKRVCRNVWGVQQRLSRITNRRESDLDRARAFFDLLLDNTPDGILAIVPEKRSQFTATELNYLLALSVRSDKTLASQPGALEKRQMVLNSILNQKK.

A disordered region spans residues methionine 1–serine 27.

The protein belongs to the SEC8 family. As to quaternary structure, the exocyst complex is composed of sec-3/exoc1, sec-5/exoc2, sec-6/exoc3, sec-8/exoc4, sec-10/exoc5, sec-15/exoc6, exo-70/exoc7 and exo-84/exoc8. Pseudocoelom.

Its function is as follows. Component of the exocyst complex involved in the docking of exocytic vesicles with fusion sites on the plasma membrane. The protein is Exocyst complex component 4 (sec-8) of Caenorhabditis elegans.